Here is a 337-residue protein sequence, read N- to C-terminus: GDP-fucose transporter, Golgi (337 aa).

Transmembrane regions (helical) follow at residues N13 to V35, V45 to V67, I95 to T117, Y121 to L140, S145 to V163, S173 to I192, V205 to N227, and S242 to L264.

Belongs to the TPT transporter family. SLC35C subfamily.

Its subcellular location is the golgi apparatus membrane. In terms of biological role, involved in GDP-fucose import from the cytoplasm into the Golgi lumen. Plays a major role in the fucosylation of N-glycans. Functions redundantly with Efr in the O-fucosylation of Notch, positively regulating Notch signaling. The polypeptide is GDP-fucose transporter, Golgi (Drosophila melanogaster (Fruit fly)).